Reading from the N-terminus, the 470-residue chain is 6-phospho-beta-galactosidase (470 aa).

D-galactose 6-phosphate-binding residues include Gln-19, His-116, Asn-159, Glu-160, and Asn-297. Glu-160 functions as the Proton donor in the catalytic mechanism. The active-site Nucleophile is Glu-375. D-galactose 6-phosphate contacts are provided by Ser-430, Trp-431, Lys-437, and Tyr-439.

Belongs to the glycosyl hydrolase 1 family.

The catalysed reaction is a 6-phospho-beta-D-galactoside + H2O = D-galactose 6-phosphate + an alcohol. It functions in the pathway carbohydrate metabolism; lactose degradation; D-galactose 6-phosphate and beta-D-glucose from lactose 6-phosphate: step 1/1. This Staphylococcus aureus (strain USA300) protein is 6-phospho-beta-galactosidase.